Here is an 80-residue protein sequence, read N- to C-terminus: Exodeoxyribonuclease 7 small subunit (80 aa).

Belongs to the XseB family. As to quaternary structure, heterooligomer composed of large and small subunits.

The protein resides in the cytoplasm. The catalysed reaction is Exonucleolytic cleavage in either 5'- to 3'- or 3'- to 5'-direction to yield nucleoside 5'-phosphates.. Bidirectionally degrades single-stranded DNA into large acid-insoluble oligonucleotides, which are then degraded further into small acid-soluble oligonucleotides. This Escherichia coli (strain SE11) protein is Exodeoxyribonuclease 7 small subunit.